The primary structure comprises 621 residues: Amino-acid acetyltransferase, mitochondrial (621 aa).

The N-terminal 77 residues, methionine 1–glutamine 77, are a transit peptide targeting the mitochondrion. Residues proline 213–tyrosine 233 form a disordered region. The region spanning leucine 424–aspartate 600 is the N-acetyltransferase domain.

The protein belongs to the acetyltransferase family.

Its subcellular location is the mitochondrion. It catalyses the reaction L-glutamate + acetyl-CoA = N-acetyl-L-glutamate + CoA + H(+). Its pathway is amino-acid biosynthesis; L-arginine biosynthesis; N(2)-acetyl-L-ornithine from L-glutamate: step 1/4. N-acetylglutamate synthase involved in arginine biosynthesis. The polypeptide is Amino-acid acetyltransferase, mitochondrial (ARG2) (Coprinopsis cinerea (strain Okayama-7 / 130 / ATCC MYA-4618 / FGSC 9003) (Inky cap fungus)).